Reading from the N-terminus, the 80-residue chain is Moroidotoxin A (80 aa).

A signal peptide spans 1 to 27 (MAAVKKHLRFALVAAITIALLVAGSVA). Positions 28–44 (DESSEDIDNIVIKTPLD) are excised as a propeptide. Cystine bridges form between cysteine 48–cysteine 65, cysteine 53–cysteine 67, and cysteine 61–cysteine 76.

It belongs to the gympietide family. Expressed in trichomes, that are stiff epidermal hairs located on the surface of petioles and leaves. Not expressed in other aerial parts.

The protein resides in the secreted. Its function is as follows. Neurotoxin certainly responsible for the defensive, persistent, and painful stings of the giant stinging tree. Inhibits inactivation of Nav1.7/SCN9A sodium channel in sensory neurons by directly interacting with TMEM233, a newly described Nav-interacting protein. Has virtually no effect on Nav1.7/SCN9A function in heterologous expression systems and in neurons that do not express TMEM233. Also weakly but significantly affects Nav1.8/SCN10A. Coexpression of TMEM233 with Nav also confers ExTxA sensitivity to Nav1.1-Nav1.6. On the Nav1.7/SCN9A channel, causes a significant hyperpolarizing shift in the voltage dependence of activation. Its effects on Nav currents are irreversible, with no apparent reduction in activity even after repeated wash steps over 30 minutes. In vivo, induces nocifensive behavior in mice (licking or biting and shaking or lifting of the affected paw) lasting for approximately 1 hour. The sequence is that of Moroidotoxin A from Dendrocnide moroides (Gympie stinging tree).